The sequence spans 155 residues: Large ribosomal subunit protein uL16 (155 aa).

The disordered stretch occupies residues 1–22 (MLSPKRTKYRKQQRGRMKGKAT).

It belongs to the universal ribosomal protein uL16 family. In terms of assembly, part of the 50S ribosomal subunit.

Functionally, binds 23S rRNA and is also seen to make contacts with the A and possibly P site tRNAs. This chain is Large ribosomal subunit protein uL16, found in Synechococcus sp. (strain JA-2-3B'a(2-13)) (Cyanobacteria bacterium Yellowstone B-Prime).